The sequence spans 308 residues: Olfactory receptor 4E2 (308 aa).

Residues 1–24 (MGALNQTRVTEFIFLGLTDNWVLE) are Extracellular-facing. N-linked (GlcNAc...) asparagine glycosylation occurs at Asn5. Residues 25-45 (ILFFVPFTVTYMLTLLGNFLI) form a helical membrane-spanning segment. Over 46–57 (VVTIVFTPRLHN) the chain is Cytoplasmic. A helical transmembrane segment spans residues 58-78 (PMYFFLSNLSFIDICHSSVTV). Residues 79–97 (PKMLEGLLLERKTISFDNC) lie on the Extracellular side of the membrane. Cys97 and Cys179 form a disulfide bridge. A helical membrane pass occupies residues 98–118 (IAQLFFLHLFACSEIFLLTIM). 2 residues coordinate Cu cation: His105 and Cys109. At 119–143 (AYDRYVAICIPLHYSNVMNMKVCVQ) the chain is on the cytoplasmic side. Residues 144-164 (LVFALWLGGTIHSLVQTFLTI) form a helical membrane-spanning segment. Residues 165–204 (RLPYCGPNIIDSYFCDVPPVIKLACTDTYLTGILIVSNSG) lie on the Extracellular side of the membrane. A helical membrane pass occupies residues 205–225 (TISLVCFLALVTSYTVILFSL). The Cytoplasmic segment spans residues 226–236 (RKQSAEGRRKA). A helical membrane pass occupies residues 237–257 (LSTCSAHFMVVALFFGPCIFL). Residues 258-268 (YTRPDSSFSID) lie on the Extracellular side of the membrane. Residue Arg260 participates in Cu cation binding. Residues 269 to 289 (KVVSVFYTVVTPLLNPLIYTL) traverse the membrane as a helical segment. Over 290–308 (RNEEVKTAMKHLRQRRICS) the chain is Cytoplasmic.

Belongs to the G-protein coupled receptor 1 family. As to expression, expressed in olfactory epithelium, specifically in the olfactory sensory neurons of the septal organ.

Its subcellular location is the cell membrane. Its activity is regulated as follows. Copper binding enhances receptor activity in response to odorant binding. In terms of biological role, olfactory receptor that is activated by the binding of organosulfur odorants with thioether groups such as (methylthio)methanethiol (MTMT) and bis(methylthiomethyl) disulfide. Also binds odorants cis-cyclooctene and tert-butyl mercaptan. The activity of this receptor is mediated by G proteins which activate adenylyl cyclase (Potential). This is Olfactory receptor 4E2 from Mus musculus (Mouse).